We begin with the raw amino-acid sequence, 306 residues long: N(1)-aminopropylagmatine ureohydrolase (306 aa).

6 residues coordinate Mn(2+): H121, D145, H147, D149, D228, and D230.

The protein belongs to the arginase family. Mn(2+) is required as a cofactor.

It catalyses the reaction N(1)-(3-aminopropyl)agmatine + H2O = urea + spermidine. It functions in the pathway amine and polyamine biosynthesis; spermidine biosynthesis. Ureohydrolase involved in the biosynthesis of spermidine via the carboxyaminopropylagmatine (CAPA) pathway. Catalyzes the conversion of aminopropylagmatine (APA) to spermidine and urea. Is highly specific to APA and incapable of releasing measurable urea from CAPA, agmatine, arginine, guanidine, guanidinobutyrate and guanidinopropionate. The sequence is that of N(1)-aminopropylagmatine ureohydrolase from Synechocystis sp. (strain ATCC 27184 / PCC 6803 / Kazusa).